We begin with the raw amino-acid sequence, 333 residues long: Type II restriction enzyme XcyI (333 aa).

It belongs to the XcyI type II restriction endonuclease family. In terms of assembly, monomer. Mg(2+) serves as cofactor.

The enzyme catalyses Endonucleolytic cleavage of DNA to give specific double-stranded fragments with terminal 5'-phosphates.. In terms of biological role, a P subtype restriction enzyme that recognizes the double-stranded sequence 5'-CCCGGG-3' and cleaves after C-1. This is Type II restriction enzyme XcyI (xcyIR) from Xanthomonas campestris pv. cyanopsidis.